A 1070-amino-acid chain; its full sequence is Duffy receptor gamma form (1070 aa).

A signal peptide spans 1–21; the sequence is MEGKKKRPLFFLLVLLLSHKA. Residues 22 to 1003 are Extracellular-facing; that stretch reads NNVLFERMNG…SYECFTKGSS (982 aa). Asn-134 and Asn-179 each carry an N-linked (GlcNAc...) asparagine glycan. 2 disulfide bridges follow: Cys-214–Cys-243 and Cys-227–Cys-234. The Cell attachment site motif lies at 279-281; that stretch reads RGD. Intrachain disulfides connect Cys-296/Cys-372, Cys-410/Cys-427, Cys-422/Cys-502, and Cys-431/Cys-500. The segment at 518–912 is disordered; that stretch reads VGSGVESKAP…LNNRKLNRDQ (395 aa). Polar residues predominate over residues 526–541; the sequence is APSSNPINEAVKSSSG. 3 stretches are compositionally biased toward basic and acidic residues: residues 544–559, 672–707, and 714–731; these read KVQEDSAHRSVNEGEG, GEVHNGTDTEPKEDGEKADPQKNIEVKGKQDTDDRS, and HTDERASLGETHMEKDTE. Asn-676 carries N-linked (GlcNAc...) asparagine glycosylation. The segment covering 732–763 has biased composition (polar residues); it reads TTGGSTLTPEQNVSVASDNGNVPGSGNKQNEG. N-linked (GlcNAc...) asparagine glycosylation is present at Asn-743. Residues 766 to 776 are compositionally biased toward low complexity; that stretch reads ALSGAESLESS. N-linked (GlcNAc...) asparagine glycosylation is present at Asn-785. Residues 796–807 are compositionally biased toward basic and acidic residues; that stretch reads GNEKDFQKHDFM. The span at 814–863 shows a compositional bias: low complexity; that stretch reads DQTSSDHTSSDQTSSDQTSSDQTSSDQTSSDQTSSDQTSSDQTSSDQTID. The span at 864-888 shows a compositional bias: basic and acidic residues; sequence TEGHHRDNVRNPEIKSSEDMSKGDF. Positions 890 to 906 are enriched in polar residues; it reads RNSNSNELYSHNNLNNR. A glycan (N-linked (GlcNAc...) asparagine) is linked at Asn-936. The helical transmembrane segment at 1004-1025 threads the bilayer; that stretch reads TGIVYFATGGAFLIILLLFASW. The Cytoplasmic portion of the chain corresponds to 1026–1070; sequence NAASNDYEEEATFDEFEEYCYNIHRTPQMPNDIEHMQQFTPLDYS.

The protein resides in the membrane. Binds to Neu5Gc-sialylated receptors on macaque erythrocytes. The chain is Duffy receptor gamma form from Plasmodium knowlesi.